A 651-amino-acid polypeptide reads, in one-letter code: Ion-translocating oxidoreductase complex subunit C (651 aa).

2 4Fe-4S ferredoxin-type domains span residues E368–Y398 and K408–F437. Positions 378, 381, 384, 388, 417, 420, 423, and 427 each coordinate [4Fe-4S] cluster. Basic and acidic residues-rich tracts occupy residues Q465 to A477 and A485 to E513. Disordered regions lie at residues Q465–D565 and L583–K624. Composition is skewed to polar residues over residues V554–T564 and N587–E600. Positions E602–Q614 are enriched in basic and acidic residues.

This sequence belongs to the 4Fe4S bacterial-type ferredoxin family. RnfC subfamily. As to quaternary structure, the complex is composed of six subunits: RnfA, RnfB, RnfC, RnfD, RnfE and RnfG. The cofactor is [4Fe-4S] cluster.

The protein localises to the cell inner membrane. Part of a membrane-bound complex that couples electron transfer with translocation of ions across the membrane. The chain is Ion-translocating oxidoreductase complex subunit C from Haemophilus influenzae (strain PittEE).